Consider the following 207-residue polypeptide: Ras-related protein Rab-8B (207 aa).

GTP contacts are provided by serine 17, glycine 18, valine 19, glycine 20, lysine 21, threonine 22, cysteine 23, threonine 35, serine 39, and threonine 40. Position 22 (threonine 22) interacts with Mg(2+). 2 short sequence motifs (switch) span residues 31–45 (DAFN…GIDF) and 63–80 (DTAG…YYRG). Positions 40 and 63 each coordinate Mg(2+). Glycine 66 provides a ligand contact to GTP. A Phosphothreonine; by LRRK2 modification is found at threonine 72. GTP contacts are provided by asparagine 121, lysine 122, aspartate 124, alanine 152, and lysine 153. Residue serine 180 is modified to Phosphoserine. The residue at position 204 (cysteine 204) is a Cysteine methyl ester. The S-geranylgeranyl cysteine moiety is linked to residue cysteine 204. A propeptide spans 205 to 207 (SLL) (removed in mature form).

This sequence belongs to the small GTPase superfamily. Rab family. In terms of assembly, associated with actin, delta-catenin and alpha and beta tubulins. Interacts with OTOF. Interacts with PEX5R. Interacts with RAB3IP. Interacts with VIM. Interacts with CDH1. Interacts with MICALL2. Interacts with GDI1, GDI2, CHML and CHM; phosphorylation at Thr-72 disrupts these interactions. Interacts with MICAL1. The cofactor is Mg(2+). In terms of processing, phosphorylation of Thr-72 in the switch II region by LRRK2 prevents the association of RAB regulatory proteins, including CHM, CHML and RAB GDP dissociation inhibitors GDI1 and GDI2.

Its subcellular location is the cell membrane. It localises to the cytoplasmic vesicle. It is found in the phagosome. The protein localises to the phagosome membrane. The protein resides in the endosome membrane. The enzyme catalyses GTP + H2O = GDP + phosphate + H(+). With respect to regulation, regulated by guanine nucleotide exchange factors (GEFs) including RAB3IP/RABIN8 which promotes the exchange of bound GDP for free GTP. Regulated by GTPase activating proteins (GAPs) which increase the GTP hydrolysis activity. Inhibited by GDP dissociation inhibitors (GDIs). Its function is as follows. The small GTPases Rab are key regulators of intracellular membrane trafficking, from the formation of transport vesicles to their fusion with membranes. Rabs cycle between an inactive GDP-bound form and an active GTP-bound form that is able to recruit to membranes different sets of downstream effectors directly responsible for vesicle formation, movement, tethering and fusion. RAB8B may be involved in polarized vesicular trafficking and neurotransmitter release. May participate in cell junction dynamics in Sertoli cells. May also participate in the export of a subset of neosynthesized proteins through a Rab8-Rab10-Rab11-dependent endososomal export route. This Homo sapiens (Human) protein is Ras-related protein Rab-8B.